A 569-amino-acid polypeptide reads, in one-letter code: MKNINNGFFLCMLLLLWCFVHSGISIDPFSPSDSLKTECVMKPPRSSETKGLLQFSRSVEDDSDEEWKIDGSGSIREMTQRIQLHEGNIYSFSAWVKLREGNNKKVGVVFRTENGRFVHGGEVRAKKRCWTLLKGGIVPDVSGSVDIFFESDDKEAKISASDVSLKQFSKQEWKLKQDQLIEKIRKSKVRFEVTYQNKTAVKGAVISIEQTKPSFLLGCAMNFRILQSEGYRNWFASRFKITSFTNEMKWYTTEKERGHENYTAADSMLKFAEENGILVRGHTVLWDDPLMQPTWVPKIEDPNDLMNVTLNRINSVMTRYKGKLTGWDVVNENVHWDYFEKMLGANASSSFYNLAFKLDPDVTMFVNEYNTIENRVEVTATPVKVKEKMEEILAYPGNMNIKGAIGAQGHFRPTQPNLAYMRSALDTLGSLGLPIWLTEVDMPKCPNQEVYIEEILREAYSHPAVKGIIIFAGPEVSGFDKLTLADKYFNNTATGDVIDKLLKEWQQSSEIPKIFMTDSENDEEEVSLLHGHYNVNVSHPWMKNMSTSFSLEVTKEMGQRQVVRVVINA.

The N-terminal stretch at 1–25 is a signal peptide; the sequence is MKNINNGFFLCMLLLLWCFVHSGIS. 3 N-linked (GlcNAc...) asparagine glycosylation sites follow: asparagine 197, asparagine 261, and asparagine 307. One can recognise a GH10 domain in the interval 209 to 500; it reads EQTKPSFLLG…NTATGDVIDK (292 aa). Catalysis depends on glutamate 332, which acts as the Proton donor. Asparagine 346 carries N-linked (GlcNAc...) asparagine glycosylation. The active-site Nucleophile is glutamate 439. Residues asparagine 490, asparagine 536, and asparagine 544 are each glycosylated (N-linked (GlcNAc...) asparagine).

The protein belongs to the glycosyl hydrolase 10 (cellulase F) family.

The enzyme catalyses Endohydrolysis of (1-&gt;4)-beta-D-xylosidic linkages in xylans.. It participates in glycan degradation; xylan degradation. Its function is as follows. Binds to and hydrolyzes insoluble and soluble xylan substrates. In Arabidopsis thaliana (Mouse-ear cress), this protein is Endo-1,4-beta-xylanase 5.